A 430-amino-acid polypeptide reads, in one-letter code: UDP-N-acetylglucosamine 1-carboxyvinyltransferase (430 aa).

22–23 (KN) is a phosphoenolpyruvate binding site. Arginine 102 is a UDP-N-acetyl-alpha-D-glucosamine binding site. Catalysis depends on cysteine 126, which acts as the Proton donor. Cysteine 126 carries the 2-(S-cysteinyl)pyruvic acid O-phosphothioketal modification. UDP-N-acetyl-alpha-D-glucosamine contacts are provided by residues 131–135 (RPVDL), 172–175 (KVSV), aspartate 317, and isoleucine 339.

It belongs to the EPSP synthase family. MurA subfamily.

It is found in the cytoplasm. It carries out the reaction phosphoenolpyruvate + UDP-N-acetyl-alpha-D-glucosamine = UDP-N-acetyl-3-O-(1-carboxyvinyl)-alpha-D-glucosamine + phosphate. It participates in cell wall biogenesis; peptidoglycan biosynthesis. Cell wall formation. Adds enolpyruvyl to UDP-N-acetylglucosamine. The chain is UDP-N-acetylglucosamine 1-carboxyvinyltransferase from Rhizobium etli (strain CIAT 652).